The sequence spans 171 residues: Translation initiation factor IF-3 (171 aa).

This sequence belongs to the IF-3 family. As to quaternary structure, monomer.

The protein localises to the cytoplasm. Its function is as follows. IF-3 binds to the 30S ribosomal subunit and shifts the equilibrium between 70S ribosomes and their 50S and 30S subunits in favor of the free subunits, thus enhancing the availability of 30S subunits on which protein synthesis initiation begins. The chain is Translation initiation factor IF-3 from Listeria innocua serovar 6a (strain ATCC BAA-680 / CLIP 11262).